The chain runs to 69 residues: Protein transport protein Sec61 subunit gamma (69 aa).

Residues Met1–Thr40 lie on the Cytoplasmic side of the membrane. Residues Leu41–Ile61 traverse the membrane as a helical segment. At Asn62 to Val69 the chain is on the extracellular side.

This sequence belongs to the SecE/SEC61-gamma family. Heterotrimeric complex composed of SEC61-alpha, SEC61-beta and SEC61-gamma.

The protein resides in the endoplasmic reticulum membrane. Its function is as follows. Necessary for protein translocation in the endoplasmic reticulum. This is Protein transport protein Sec61 subunit gamma (sec61g) from Dictyostelium discoideum (Social amoeba).